The primary structure comprises 834 residues: Mannosyl-oligosaccharide glucosidase (834 aa).

Residues 1-10 (MARGERRRRA) show a composition bias toward basic residues. Positions 1–37 (MARGERRRRAAAAEGARPLERARAAGRRDGRAGGARG) are disordered. The Cytoplasmic portion of the chain corresponds to 1–43 (MARGERRRRAAAAEGARPLERARAAGRRDGRAGGARGSASGAA). Positions 3-9 (RGERRRR) match the Endoplasmic reticulum targeting motif. Residues 17–31 (RPLERARAAGRRDGR) show a composition bias toward basic and acidic residues. A helical; Signal-anchor for type II membrane protein transmembrane segment spans residues 44 to 64 (LAVVVLALAFGLSGRWVLAWL). The Lumenal segment spans residues 65 to 834 (RVRRALTLHP…LVLLIMAEEY (770 aa)). The segment at 74 to 136 (PAPSALPPDS…GTPPKLRHTC (63 aa)) is required for endoplasmic reticulum targeting. D580 serves as the catalytic Proton donor. N654 carries N-linked (GlcNAc...) asparagine glycosylation. E804 acts as the Proton acceptor in catalysis.

It belongs to the glycosyl hydrolase 63 family.

Its subcellular location is the endoplasmic reticulum membrane. It carries out the reaction N(4)-(alpha-D-Glc-(1-&gt;2)-alpha-D-Glc-(1-&gt;3)-alpha-D-Glc-(1-&gt;3)-alpha-D-Man-(1-&gt;2)-alpha-D-Man-(1-&gt;2)-alpha-D-Man-(1-&gt;3)-[alpha-D-Man-(1-&gt;2)-alpha-D-Man-(1-&gt;3)-[alpha-D-Man-(1-&gt;2)-alpha-D-Man-(1-&gt;6)]-alpha-D-Man-(1-&gt;6)]-beta-D-Man-(1-&gt;4)-beta-D-GlcNAc-(1-&gt;4)-beta-D-GlcNAc)-L-asparaginyl-[protein] + H2O = N(4)-(alpha-D-Glc-(1-&gt;3)-alpha-D-Glc-(1-&gt;3)-alpha-D-Man-(1-&gt;2)-alpha-D-Man-(1-&gt;2)-alpha-D-Man-(1-&gt;3)-[alpha-D-Man-(1-&gt;2)-alpha-D-Man-(1-&gt;3)-[alpha-D-Man-(1-&gt;2)-alpha-D-Man-(1-&gt;6)]-alpha-D-Man-(1-&gt;6)]-beta-D-Man-(1-&gt;4)-beta-D-GlcNAc-(1-&gt;4)-beta-D-GlcNAc)-L-asparaginyl-[protein] + beta-D-glucose. Its pathway is glycan metabolism; N-glycan degradation. With respect to regulation, inhibited by the deoxynojirimycin derivative N-9'-Methoxynonyl-1-Deoxynojirimycin. Functionally, in the context of N-glycan degradation, cleaves the distal alpha 1,2-linked glucose residue from the Glc(3)Man(9)GlcNAc(2) oligosaccharide precursor in a highly specific manner. In terms of biological role, (Microbial infection) Required for successful influenza or dengue virus infection; inhibition of its activity by a deoxynojirimycin derivative prevents death in mice infected with lethal doses of influenza or dengue viruses, even when administrated after infection. This is Mannosyl-oligosaccharide glucosidase from Mus musculus (Mouse).